We begin with the raw amino-acid sequence, 656 residues long: Acetyl-coenzyme A synthetase (656 aa).

Residues 198-201 and T316 each bind CoA; that span reads RGGR. Residues 392–394, 416–421, D507, and R522 each bind ATP; these read GEP and DTFWQT. S530 provides a ligand contact to CoA. R533 lines the ATP pocket. Mg(2+) is bound by residues V544, H546, and V549. Residue R591 coordinates CoA. Position 616 is an N6-acetyllysine (K616).

The protein belongs to the ATP-dependent AMP-binding enzyme family. Requires Mg(2+) as cofactor. In terms of processing, acetylated. Deacetylation by the SIR2-homolog deacetylase activates the enzyme.

The enzyme catalyses acetate + ATP + CoA = acetyl-CoA + AMP + diphosphate. Its function is as follows. Catalyzes the conversion of acetate into acetyl-CoA (AcCoA), an essential intermediate at the junction of anabolic and catabolic pathways. AcsA undergoes a two-step reaction. In the first half reaction, AcsA combines acetate with ATP to form acetyl-adenylate (AcAMP) intermediate. In the second half reaction, it can then transfer the acetyl group from AcAMP to the sulfhydryl group of CoA, forming the product AcCoA. The chain is Acetyl-coenzyme A synthetase from Rhodobacter capsulatus (strain ATCC BAA-309 / NBRC 16581 / SB1003).